The sequence spans 74 residues: ATP synthase subunit c (74 aa).

2 helical membrane-spanning segments follow: residues 9-29 and 51-71; these read IAIAFMAFGMAGAALGVASIF and LIGAGLAEAMGLFSFILAILL.

The protein belongs to the ATPase C chain family. As to quaternary structure, F-type ATPases have 2 components, F(1) - the catalytic core - and F(0) - the membrane proton channel. F(1) has five subunits: alpha(3), beta(3), gamma(1), delta(1), epsilon(1). F(0) has three main subunits: a(1), b(2) and c(10-14). The alpha and beta chains form an alternating ring which encloses part of the gamma chain. F(1) is attached to F(0) by a central stalk formed by the gamma and epsilon chains, while a peripheral stalk is formed by the delta and b chains.

It localises to the cell inner membrane. In terms of biological role, f(1)F(0) ATP synthase produces ATP from ADP in the presence of a proton or sodium gradient. F-type ATPases consist of two structural domains, F(1) containing the extramembraneous catalytic core and F(0) containing the membrane proton channel, linked together by a central stalk and a peripheral stalk. During catalysis, ATP synthesis in the catalytic domain of F(1) is coupled via a rotary mechanism of the central stalk subunits to proton translocation. Its function is as follows. Key component of the F(0) channel; it plays a direct role in translocation across the membrane. A homomeric c-ring of between 10-14 subunits forms the central stalk rotor element with the F(1) delta and epsilon subunits. The protein is ATP synthase subunit c of Orientia tsutsugamushi (strain Ikeda) (Rickettsia tsutsugamushi).